Here is a 403-residue protein sequence, read N- to C-terminus: MTTEPLTPPTSGALLHTEIMSLNVGPQHPSTHGVLRLVVDMDGEYVTRVTPHMGYLHTGFEKTFEHRTYHQGVTYAPRTDYLHCFGHELAYVLSVEKLLGAEVPERATTVRVMLHELGRIHSHLVFVGTGLLDLGALTPFFYAFREKEAVQDLFEAVCGYRMNQGYFRVGGLARDIPEDWPARVAAFLDTFERGVDEYETLFAKNPIFLDRAKGVGVIPRDVAIDLGLTGPNLRASGVPLDHRKANPYCGYETYDFEVPVSQAGDSLARFQLRLLELRESAKIIRQALKRLTPGPIKDPNRKISLPPRSELETSMEAVIHHFKLVTEGFHPPKGEVYVPTESARGEVGYYIVSDGGSMPYRVKIRAPSFVNLQALEYACVGGQFADLITILASIDPVLGDVDR.

Belongs to the complex I 49 kDa subunit family. NDH-1 is composed of 15 different subunits. Subunits NuoB, C, D, E, F, and G constitute the peripheral sector of the complex.

The protein localises to the cell membrane. It catalyses the reaction a quinone + NADH + 5 H(+)(in) = a quinol + NAD(+) + 4 H(+)(out). Functionally, NDH-1 shuttles electrons from NADH, via FMN and iron-sulfur (Fe-S) centers, to quinones in the respiratory chain. The immediate electron acceptor for the enzyme in this species is believed to be a menaquinone. Couples the redox reaction to proton translocation (for every two electrons transferred, four hydrogen ions are translocated across the cytoplasmic membrane), and thus conserves the redox energy in a proton gradient. This chain is NADH-quinone oxidoreductase subunit D, found in Deinococcus geothermalis (strain DSM 11300 / CIP 105573 / AG-3a).